The primary structure comprises 554 residues: 2-succinyl-5-enolpyruvyl-6-hydroxy-3-cyclohexene-1-carboxylate synthase (554 aa).

The protein belongs to the TPP enzyme family. MenD subfamily. In terms of assembly, homodimer. Requires Mg(2+) as cofactor. Mn(2+) is required as a cofactor. Thiamine diphosphate serves as cofactor.

It carries out the reaction isochorismate + 2-oxoglutarate + H(+) = 5-enolpyruvoyl-6-hydroxy-2-succinyl-cyclohex-3-ene-1-carboxylate + CO2. The protein operates within quinol/quinone metabolism; 1,4-dihydroxy-2-naphthoate biosynthesis; 1,4-dihydroxy-2-naphthoate from chorismate: step 2/7. Its pathway is quinol/quinone metabolism; menaquinone biosynthesis. Its function is as follows. Catalyzes the thiamine diphosphate-dependent decarboxylation of 2-oxoglutarate and the subsequent addition of the resulting succinic semialdehyde-thiamine pyrophosphate anion to isochorismate to yield 2-succinyl-5-enolpyruvyl-6-hydroxy-3-cyclohexene-1-carboxylate (SEPHCHC). In Lactococcus lactis subsp. cremoris (strain SK11), this protein is 2-succinyl-5-enolpyruvyl-6-hydroxy-3-cyclohexene-1-carboxylate synthase.